Here is a 168-residue protein sequence, read N- to C-terminus: MPRSRITGNLIDKTFSIVANILLRIIPTTSGEKEAFTYYRDGMSAQSEGNYAEALQNYYEAMRLEIDPYDRSYILYNIGLIHTSNGEHTKALEYYFRALERNPFLPQAFNNMAVICHYRGEQAIRQGDSEIAEAWFDQAAEYWKQAIALTPGNYIEAQNWLKITRRFE.

TPR repeat units follow at residues 35-68 (AFTYYRDGMSAQSEGNYAEALQNYYEAMRLEIDP), 72-105 (SYILYNIGLIHTSNGEHTKALEYYFRALERNPFL), and 120-153 (GEQAIRQGDSEIAEAWFDQAAEYWKQAIALTPGN).

It belongs to the Ycf3 family.

Its subcellular location is the plastid. The protein localises to the chloroplast thylakoid membrane. Essential for the assembly of the photosystem I (PSI) complex. May act as a chaperone-like factor to guide the assembly of the PSI subunits. This chain is Photosystem I assembly protein Ycf3, found in Populus alba (White poplar).